Reading from the N-terminus, the 446-residue chain is MREILHIQGGQCGNQIGAKFWEVVCAEHGIDATGRYGGDSDLQLERVNVYYNEASCGRFVPRAVLMDLEPGTMDSVRSGPYGHIFRPDNFVFGQSGAGNNSAKGHYTEGAELIDSVLDVVRKEAENCDCLQGFQVCHSLGGGTGSAMGTLLISKIREEYPDRMMLTFSVFPSPKVSDTVVEPYNATLSVHQLVENADECMVLDNEALYDICFRTLKLTTPSFGDLNHLISATMSGVTCCLRFPGQLNSDLRKLAVNLIPFPRLHFFMVGFAPLTSRGSQQYRALTVPELTQQMWDAKNMMCAADPRHGRYLTASAMFRGKMSTKEVDEQMLNVQNKNSSYFVEWIPNNVKSTVCDIPPHGLKMASTFIGNSTSIQEMFRRVSEQFTAMFRRKAFLHWYTGEGMDEMEFTEAESNMNDLVSEYQQYQDATADEEGEYEDEEEGDLQD.

Residues Gln11, Glu69, Ser138, Gly142, Thr143, Gly144, Asn204, and Asn226 each coordinate GTP. Glu69 is a binding site for Mg(2+). The interval 422 to 446 (YQQYQDATADEEGEYEDEEEGDLQD) is disordered. A compositionally biased stretch (acidic residues) spans 429 to 446 (TADEEGEYEDEEEGDLQD).

Belongs to the tubulin family. In terms of assembly, dimer of alpha and beta chains. A typical microtubule is a hollow water-filled tube with an outer diameter of 25 nm and an inner diameter of 15 nM. Alpha-beta heterodimers associate head-to-tail to form protofilaments running lengthwise along the microtubule wall with the beta-tubulin subunit facing the microtubule plus end conferring a structural polarity. Microtubules usually have 13 protofilaments but different protofilament numbers can be found in some organisms and specialized cells. The cofactor is Mg(2+). As to expression, found in areas of rapidly dividing tissues.

Its subcellular location is the cytoplasm. It is found in the cytoskeleton. Its function is as follows. Tubulin is the major constituent of microtubules, a cylinder consisting of laterally associated linear protofilaments composed of alpha- and beta-tubulin heterodimers. Microtubules grow by the addition of GTP-tubulin dimers to the microtubule end, where a stabilizing cap forms. Below the cap, tubulin dimers are in GDP-bound state, owing to GTPase activity of alpha-tubulin. The polypeptide is Tubulin beta-1 chain (TUBB1) (Zea mays (Maize)).